The chain runs to 424 residues: Inhibin beta A chain (424 aa).

An N-terminal signal peptide occupies residues M1 to S20. Positions S21–R308 are excised as a propeptide. N-linked (GlcNAc...) asparagine glycosylation occurs at N165. Disordered regions lie at residues Q178–F197 and K259–R306. Positions A188–F197 are enriched in acidic residues. Basic and acidic residues predominate over residues K263–E275. 4 disulfide bridges follow: C312-C320, C319-C389, C348-C421, and C352-C423.

It belongs to the TGF-beta family. As to quaternary structure, dimeric, linked by one or more disulfide bonds. Inhibin A is a dimer of alpha/INHA and beta-A/INHBA. Activin A is a homodimer of beta-A/INHBA. Activin AB is a dimer of beta-A/INHBA and beta-B/INHBB. Interacts with FST and FSTL3; these interactions prevent activin A interaction to its type II receptor. Activin A interacts with ACVR2A. Activin A interacts with BMPR2. Inhibin A interacts with ACVR1; this interaction creates a non-signaling complex (NSC) that inhibits ACVR1-mediated BMP signaling. Inhibin A interacts with ACVR2A.

It localises to the secreted. Its function is as follows. Inhibins/activins are involved in regulating a number of diverse functions such as hypothalamic and pituitary hormone secretion, gonadal hormone secretion, germ cell development and maturation, erythroid differentiation, insulin secretion, nerve cell survival, embryonic axial development or bone growth, depending on their subunit composition. In terms of biological role, activin A is a homodimer of INHBA that plays a role in several essential biological processes including embryonic development, stem cell maintenance and differentiation, haematopoiesis, cell proliferation and tissue fibrosis. Signals through type I (such as ACVR1B or ACVR1C) and type II receptors (such as ACVR2A, ACVR2B or BMPR2) which, upon ligand binding, phosphorylate SMAD2 and SMAD3 intracellular signaling mediators that form a complex with SMAD4, translocate to the nucleus and modulate gene expression. Can also activate alternative non-canonical intracellular signaling pathways including the p38 MAPK, extracellular signal-regulated kinases 1/2 (ERK1/2) and c-Jun N-terminal kinases (JNKs) to modulate cell migration and differentiation. Alternatively, promotes osteoblastic differentiation via ACVRL1-SMAD1/5/9 pathway. In addition, can engage the type I receptor ACVR1 to form an ACVR1-activin A-type II receptor non-signaling complex (NSC) that renders receptors unavailable for engagement with BMPs, hence resulting in an apparent inhibition of ACVR1-mediated BMP signaling. Inhibin A is a dimer of alpha/INHA and beta-A/INHBA that functions as a feedback regulator in the hypothalamic-pituitary-gonadal (HPG) axis. Inhibits the secretion of FSH from the anterior pituitary gland by acting on pituitary gonadotrope cells. Antagonizes activin A by binding to the proteoglycan, betaglycan, and forming a stable complex with and, thereby, sequestering type II activin receptors while excluding type I receptor. The protein is Inhibin beta A chain (INHBA) of Sus scrofa (Pig).